Reading from the N-terminus, the 1959-residue chain is Myosin-9 (1959 aa).

The 51-residue stretch at A27 to P77 folds into the Myosin N-terminal SH3-like domain. In terms of domain architecture, Myosin motor spans S81–D776. G174–T181 is a binding site for ATP. The actin-binding stretch occupies residues L654–H676. Residues I779–A808 enclose the IQ domain. Residues L837–L1925 adopt a coiled-coil conformation. 4 disordered regions span residues E1118 to E1168, R1694 to G1717, L1879 to K1917, and K1936 to E1959. 2 stretches are compositionally biased toward basic and acidic residues: residues S1122 to L1148 and R1694 to D1704. Residues D1947–E1959 show a composition bias toward basic and acidic residues.

Belongs to the TRAFAC class myosin-kinesin ATPase superfamily. Myosin family. As to quaternary structure, myosin is a hexameric protein that consists of 2 heavy chain subunits (MHC), 2 alkali light chain subunits (MLC) and 2 regulatory light chain subunits (MLC-2). In terms of tissue distribution, expressed in fibroblasts, brain, lung, kidney, spleen, and skeletal, cardiac and smooth muscles.

It localises to the cytoplasm. Its subcellular location is the cytoskeleton. The protein localises to the cell cortex. The protein resides in the cytoplasmic vesicle. It is found in the secretory vesicle. It localises to the cortical granule. Functionally, cellular myosin that appears to play a role in cytokinesis, cell shape, and specialized functions such as secretion and capping. This Gallus gallus (Chicken) protein is Myosin-9 (MYH9).